The sequence spans 191 residues: Putative RNA-binding protein EEED8.4 (191 aa).

Residues 55 to 132 enclose the RRM domain; sequence KSVFIGNVDF…RPIVVTAKRT (78 aa). The interval 136-160 is disordered; the sequence is GMGHGVRGSSRGTFGRGRGAARGAP.

The chain is Putative RNA-binding protein EEED8.4 from Caenorhabditis elegans.